The primary structure comprises 161 residues: Nucleotide-binding protein Daci_4781 (161 aa).

It belongs to the YajQ family.

In terms of biological role, nucleotide-binding protein. This chain is Nucleotide-binding protein Daci_4781, found in Delftia acidovorans (strain DSM 14801 / SPH-1).